A 101-amino-acid polypeptide reads, in one-letter code: Protein translation factor SUI1 homolog (101 aa).

This sequence belongs to the SUI1 family.

In Aeropyrum pernix (strain ATCC 700893 / DSM 11879 / JCM 9820 / NBRC 100138 / K1), this protein is Protein translation factor SUI1 homolog.